Reading from the N-terminus, the 1067-residue chain is MAARRMAQESLDSVLQEKSKRYGDSEAVGEALHLKAQDLLRTGSRARADVYEDIHGDSRYSASGSGVYSLDMGREGLRGDMFVGPSFRSSNQSVGEDSYLRKECGRDLEPAHTDSRDQSFGHRNLGHFPSQDWKLALRGSWEQDLGHSVSQESSWSQEYGFGPSLLGDLASSRRMEKESRDYDLDHPGEVDSVSRSSGQVLTRGRSLNIADQEGTLLGKGDTQGLLGAKGVGKLITLKSMTTKKIPVASRITSKPQGTNQIQKPTPSPDVTIGTSPVLDEIQFAALKIPLGLDLRTLGLPRRKMGFDAIDKADVFSRFGIEIIKWAGFHTIKDDLKFSQLFQTLFELETETCAKMLASFKCSLKPEHRDFCFFTIKFLKHSALKTPRVDNEFLNMLLDKGAVKTKNCFFEIIKPFDKSIMRLQDRLLKGVTPLLMACNAYELSVKMKTLTSPLDLAMALETTNSLCRKSLALLGQTFSLASSFRQEKILEAVGLQDIAPSPAYFPNFEDSTLFGREYIDHLKAWLMASGYPLQLKRAVPPESREQKTTAQTWASSTLSQAVPQRADHRVVDTIDQLVMRVIQGRLSPRERTLLLQDPAYWFLSDESSLEYKYYKLKLAESQRLNHSWPIVERRPTPAQCAVRAMLYAQAVRSLKRRLLPWQRRRLIRSQGPRGLKAKKATTAQQTSLSSGTRQKHHGRQASGSLRVKPPPRDSSDAAQDCLSEPAKPCPQPSSPGALGPSPRPTGADDSEALPASSRCPSANMDAKTMETAEKLARFVAQVGPEIEQFSIENSTDNPDLWFLHDQSSSAFKFYREKVLELCPSISFQSTGEAGDSVQSPTAGKEGKGEPQEGHPEQEASLEGTEVLPEEEEEDEEESEDEGGEETSTLRPQAGAAKCPGSEGSSPTDSIPGEGSREDQASTPGLSQASSGSCFPRKRISSKSLKVGMIPAPKRVCLIQESKVHEPVRIAYDRPRGRPIAKKKKPKDMEFSQQKLTDKNVGFQMLQKMGWKEGHGLGSLGKGIREPVSVGALSEGEGLGADGPEQKEDTFDVFRQRMMQMYRHKRASK.

Ser-93 is modified (phosphoserine). Positions 177–189 are enriched in basic and acidic residues; the sequence is KESRDYDLDHPGE. The disordered stretch occupies residues 177-199; that stretch reads KESRDYDLDHPGEVDSVSRSSGQ. Ser-206 carries the post-translational modification Phosphoserine. Lys-219 participates in a covalent cross-link: Glycyl lysine isopeptide (Lys-Gly) (interchain with G-Cter in SUMO2). Thr-265 is modified (phosphothreonine). Ser-267 and Ser-586 each carry phosphoserine. The stretch at 573–616 is one SURP motif 1 repeat; the sequence is IDQLVMRVIQGRLSPRERTLLLQDPAYWFLSDESSLEYKYYKLK. Residues 668 to 767 are disordered; it reads SQGPRGLKAK…CPSANMDAKT (100 aa). Polar residues predominate over residues 680-691; it reads TTAQQTSLSSGT. Phosphoserine is present on Ser-740. The residue at position 744 (Thr-744) is a Phosphothreonine. The stretch at 770 to 813 is one SURP motif 2 repeat; that stretch reads TAEKLARFVAQVGPEIEQFSIENSTDNPDLWFLHDQSSSAFKFY. Positions 825–840 are enriched in polar residues; the sequence is SFQSTGEAGDSVQSPT. Disordered stretches follow at residues 825-944 and 967-991; these read SFQS…KSLK and RIAY…EFSQ. Ser-838 carries the post-translational modification Phosphoserine. Residues 843–856 show a composition bias toward basic and acidic residues; the sequence is KEGKGEPQEGHPEQ. Residues 866-883 are compositionally biased toward acidic residues; sequence LPEEEEEDEEESEDEGGE. Residues 919-931 show a composition bias toward polar residues; that stretch reads ASTPGLSQASSGS. The span at 975–984 shows a compositional bias: basic residues; the sequence is GRPIAKKKKP. Residues 980–985 carry the Nuclear localization signal motif; sequence KKKKPK. A G-patch domain is found at 996-1042; it reads DKNVGFQMLQKMGWKEGHGLGSLGKGIREPVSVGALSEGEGLGADGP.

Its subcellular location is the nucleus. Its function is as follows. May play a role in mRNA splicing. The chain is SURP and G-patch domain-containing protein 2 (Sugp2) from Mus musculus (Mouse).